We begin with the raw amino-acid sequence, 89 residues long: Small ribosomal subunit protein uS15 (89 aa).

Belongs to the universal ribosomal protein uS15 family. In terms of assembly, part of the 30S ribosomal subunit. Forms a bridge to the 50S subunit in the 70S ribosome, contacting the 23S rRNA.

Its function is as follows. One of the primary rRNA binding proteins, it binds directly to 16S rRNA where it helps nucleate assembly of the platform of the 30S subunit by binding and bridging several RNA helices of the 16S rRNA. Forms an intersubunit bridge (bridge B4) with the 23S rRNA of the 50S subunit in the ribosome. This is Small ribosomal subunit protein uS15 from Photorhabdus luminescens (Xenorhabdus luminescens).